Reading from the N-terminus, the 477-residue chain is MKNVKKRVGVVLLILAVLGVYMLAMPANTVSAAGVPFNTKYPYGPTSIADNQSEVTAMLKAEWEDWKSKRITSNGAGGYKRVQRDASTNYDTVSEGMGYGLLLAVCFNEQALFDDLYRYVKSHFNGNGLMHWHIDANNNVTSHDGGDGAATDADEDIALALIFADKLWGSSGAINYGQEARTLINNLYNHCVEHGSYVLKPGDRWGGSSVTNPSYFAPAWYKVYAQYTGDTRWNQVADKCYQIVEEVKKYNNGTGLVPDWCTASGTPASGQSYDYKYDATRYGWRTAVDYSWFGDQRAKANCDMLTKFFARDGAKGIVDGYTIQGSKISNNHNASFIGPVAAASMTGYDLNFAKELYRETVAVKDSEYYGYYGNSLRLLTLLYITGNFPNPLSDLSGQPTPPSNPTPSLPPQVVYGDVNGDGNVNSTDLTMLKRYLLKSVTNINREAADVNRDGAINSSDMTILKRYLIKSIPHLPY.

A signal peptide spans 1 to 32 (MKNVKKRVGVVLLILAVLGVYMLAMPANTVSA). Residue Glu-95 is the Proton donor of the active site. Asp-152 (nucleophile) is an active-site residue. A Dockerin domain is found at 411 to 477 (PQVVYGDVNG…LIKSIPHLPY (67 aa)).

The protein belongs to the glycosyl hydrolase 8 (cellulase D) family.

It catalyses the reaction Endohydrolysis of (1-&gt;4)-beta-D-glucosidic linkages in cellulose, lichenin and cereal beta-D-glucans.. This enzyme catalyzes the endohydrolysis of 1,4-beta-glucosidic linkages in cellulose, lichenin and cereal beta-D-glucans. The polypeptide is Endoglucanase A (celA) (Acetivibrio thermocellus (strain ATCC 27405 / DSM 1237 / JCM 9322 / NBRC 103400 / NCIMB 10682 / NRRL B-4536 / VPI 7372) (Clostridium thermocellum)).